A 275-amino-acid chain; its full sequence is Energy-coupling factor transporter ATP-binding protein EcfA1 (275 aa).

The ABC transporter domain occupies 5–240 (IDVKNLSFRY…NDLDQIGLDD (236 aa)). 40–47 (GHNGSGKS) provides a ligand contact to ATP.

The protein belongs to the ABC transporter superfamily. Energy-coupling factor EcfA family. As to quaternary structure, forms a stable energy-coupling factor (ECF) transporter complex composed of 2 membrane-embedded substrate-binding proteins (S component), 2 ATP-binding proteins (A component) and 2 transmembrane proteins (T component).

The protein localises to the cell membrane. ATP-binding (A) component of a common energy-coupling factor (ECF) ABC-transporter complex. Unlike classic ABC transporters this ECF transporter provides the energy necessary to transport a number of different substrates. This is Energy-coupling factor transporter ATP-binding protein EcfA1 from Streptococcus pneumoniae serotype 4 (strain ATCC BAA-334 / TIGR4).